A 159-amino-acid polypeptide reads, in one-letter code: Phosphopantetheine adenylyltransferase (159 aa).

Thr-10 provides a ligand contact to substrate. Residues 10–11 (TF) and His-18 contribute to the ATP site. Residues Lys-42, Met-74, and Arg-88 each contribute to the substrate site. ATP is bound by residues 89–91 (GLR), Glu-99, and 124–130 (WSFISSS).

This sequence belongs to the bacterial CoaD family. In terms of assembly, homohexamer. Mg(2+) serves as cofactor.

The protein resides in the cytoplasm. It catalyses the reaction (R)-4'-phosphopantetheine + ATP + H(+) = 3'-dephospho-CoA + diphosphate. The protein operates within cofactor biosynthesis; coenzyme A biosynthesis; CoA from (R)-pantothenate: step 4/5. In terms of biological role, reversibly transfers an adenylyl group from ATP to 4'-phosphopantetheine, yielding dephospho-CoA (dPCoA) and pyrophosphate. This chain is Phosphopantetheine adenylyltransferase, found in Enterobacter sp. (strain 638).